The following is a 507-amino-acid chain: Probable DNA ligase (507 aa).

Glutamate 209 is a binding site for ATP. Catalysis depends on lysine 211, which acts as the N6-AMP-lysine intermediate. Positions 216, 231, 260, 300, 372, and 378 each coordinate ATP.

It belongs to the ATP-dependent DNA ligase family. Mg(2+) is required as a cofactor.

It catalyses the reaction ATP + (deoxyribonucleotide)n-3'-hydroxyl + 5'-phospho-(deoxyribonucleotide)m = (deoxyribonucleotide)n+m + AMP + diphosphate.. DNA ligase that seals nicks in double-stranded DNA during DNA replication, DNA recombination and DNA repair. In Mycobacterium bovis (strain ATCC BAA-935 / AF2122/97), this protein is Probable DNA ligase.